We begin with the raw amino-acid sequence, 264 residues long: Acyl-[acyl-carrier-protein]--UDP-N-acetylglucosamine O-acyltransferase (264 aa).

Belongs to the transferase hexapeptide repeat family. LpxA subfamily. Homotrimer.

The protein resides in the cytoplasm. It carries out the reaction a (3R)-hydroxyacyl-[ACP] + UDP-N-acetyl-alpha-D-glucosamine = a UDP-3-O-[(3R)-3-hydroxyacyl]-N-acetyl-alpha-D-glucosamine + holo-[ACP]. Its pathway is glycolipid biosynthesis; lipid IV(A) biosynthesis; lipid IV(A) from (3R)-3-hydroxytetradecanoyl-[acyl-carrier-protein] and UDP-N-acetyl-alpha-D-glucosamine: step 1/6. Involved in the biosynthesis of lipid A, a phosphorylated glycolipid that anchors the lipopolysaccharide to the outer membrane of the cell. In Rickettsia typhi (strain ATCC VR-144 / Wilmington), this protein is Acyl-[acyl-carrier-protein]--UDP-N-acetylglucosamine O-acyltransferase.